The following is a 705-amino-acid chain: MVRATPIHRYRNIGIMAHIDAGKTTTSERILFYAGVCHQMGEVHDGAAVMDWMEQEQERGITITSAATTVFWSGMDKSMPQHRFNIIDTPGHVDFTIEVERSLRVLDGAVFVLCAVGGVQPQSETVWRQANKYFVPRMAFVNKMDRTGANFDKVVEQLKARLGAYPVPMQVPIGAEDGFEGVIDLLKMKAIHWDAASQGTVFEYRDIPIELVDKASKARAFMVEAAAEATEELMDKYLNEGELKEQEILEGLRERTLKVEIIPVFCGSAFKNKGVQAMLDGVIHLLPSPADRPPVQGLDEKGNECRCKASDSEPFSALAFKIMTDPFVGSLTFFRVYSGVLNSGDQVYNSVKLKKERVGRILQMHSNQRDEIKEVRAGDIAAAVGLKDVTTGDTLCDQNHIIILERMIFPEPVISMAVEPKTKSDQEKMGMALGRLAQEDPSFRVKTDEESGQTIISGMGELHLDIIVDRMRREFNVEANVGKPQVAYRETIRKSDVKSDYKHVKQSGGKGQYGHVVIEISPMSDVDKQHPDVKGDFLFINEITGGVIPKEFISPIEKGLRETITSGPLAGFPVVGVKVKLVFGSYHDVDSSEMAFKLAASMAFKQGFAKANPVLLEPIMKVEIVSPEDYLGDIMGDVSRRRGILQGQDDSLSGKVINAMIPLGEMFGYATSLRSMTQGRATFAMEFDHYEEAPTNIADTVIKKT.

A tr-type G domain is found at 8–290; sequence HRYRNIGIMA…GVIHLLPSPA (283 aa). Residues 17–24, 88–92, and 142–145 contribute to the GTP site; these read AHIDAGKT, DTPGH, and NKMD.

The protein belongs to the TRAFAC class translation factor GTPase superfamily. Classic translation factor GTPase family. EF-G/EF-2 subfamily.

Its subcellular location is the cytoplasm. Catalyzes the GTP-dependent ribosomal translocation step during translation elongation. During this step, the ribosome changes from the pre-translocational (PRE) to the post-translocational (POST) state as the newly formed A-site-bound peptidyl-tRNA and P-site-bound deacylated tRNA move to the P and E sites, respectively. Catalyzes the coordinated movement of the two tRNA molecules, the mRNA and conformational changes in the ribosome. This chain is Elongation factor G, found in Xylella fastidiosa (strain M12).